A 166-amino-acid polypeptide reads, in one-letter code: MMSRLKTAVYDYLNDVDITECTEMDLLCQLSNCCDFINETYAKNYDTLYDIMERDILSYNIVNIKNTLTFALRDASPSVKLATLTLLASVIKKLNKIQHTDAAMFSEVIDGIVAEEQQVIGFIQKKCKYNTTYYNVRSGGCKISVYLTAAVVGFVAYGILKWYRGT.

A helical membrane pass occupies residues 138 to 160; that stretch reads SGGCKISVYLTAAVVGFVAYGIL.

As to quaternary structure, interacts with host BAX; this interaction inhibits apoptosis activation. Interacts with host BAK1.

The protein resides in the host mitochondrion. The protein localises to the host membrane. Plays a role in the inhibition of mitochondria-mediated apoptosis by blocking the activation of mitochondria-tranlocalized BAX thereby maintaining pro-apoptotic BAX in an inactive conformation. Also inhibits apoptosis in a BAX-independent manner by interacting with and inhibiting host BAK1. The protein is Apoptosis regulator M11L (m011L) of Myxoma virus (strain Lausanne) (MYXV).